A 430-amino-acid chain; its full sequence is Cytochrome c biogenesis protein CcsB (430 aa).

The next 3 helical transmembrane spans lie at 14–34 (LRIA…GTAI), 72–92 (SSWF…CSWR), and 162–182 (AGPM…VWGS).

This sequence belongs to the Ccs1/CcsB family. May interact with CcsA.

The protein resides in the cellular thylakoid membrane. Functionally, required during biogenesis of c-type cytochromes (cytochrome c6 and cytochrome f) at the step of heme attachment. The chain is Cytochrome c biogenesis protein CcsB from Prochlorococcus marinus (strain MIT 9313).